A 626-amino-acid chain; its full sequence is Cysteine desulfurase (626 aa).

2 disordered regions span residues 1 to 21 (MTNT…SDPF) and 41 to 64 (AGVS…PTTS). The segment at 1–225 (MTNTVPSVPA…AGAVGFDIHQ (225 aa)) is cargo-loading domain. Positions 226–626 (VRRDFPILQE…RRIQTGSLAL (401 aa)) are cysteine desulfurase domain. Lysine 444 bears the N6-(pyridoxal phosphate)lysine mark. The active-site Cysteine persulfide intermediate is the cysteine 582.

The protein belongs to the class-V pyridoxal-phosphate-dependent aminotransferase family. Csd subfamily. In terms of assembly, there are 1-2 copies of this protein in each type 2A encapsulin shell. Pyridoxal 5'-phosphate is required as a cofactor.

It localises to the encapsulin nanocompartment. It carries out the reaction (sulfur carrier)-H + L-cysteine = (sulfur carrier)-SH + L-alanine. With respect to regulation, encapsulated enzyme is 7-fold more active than encapsulated enzyme. Cargo protein of a type 2A encapsulin nanocompartment probably involved in sulfur metabolism. Cysteine desulfurases mobilize the sulfur from L-cysteine to yield L-alanine, an essential step in sulfur metabolism for biosynthesis of a variety of sulfur-containing biomolecules. This Synechococcus elongatus (strain ATCC 33912 / PCC 7942 / FACHB-805) (Anacystis nidulans R2) protein is Cysteine desulfurase.